A 300-amino-acid chain; its full sequence is N-acetylmannosamine kinase (300 aa).

ATP-binding positions include 5–12 (ALDIGGTK) and 132–139 (GVGGGIVL). Residues H156, C166, C168, and C173 each contribute to the Zn(2+) site.

This sequence belongs to the ROK (NagC/XylR) family. NanK subfamily. In terms of assembly, homodimer.

It carries out the reaction an N-acyl-D-mannosamine + ATP = an N-acyl-D-mannosamine 6-phosphate + ADP + H(+). Its pathway is amino-sugar metabolism; N-acetylneuraminate degradation; D-fructose 6-phosphate from N-acetylneuraminate: step 2/5. Functionally, catalyzes the phosphorylation of N-acetylmannosamine (ManNAc) to ManNAc-6-P. The protein is N-acetylmannosamine kinase of Haemophilus influenzae (strain PittEE).